The chain runs to 329 residues: GTPase Obg (329 aa).

The Obg domain maps to 1–159 (MQFIDEAKIF…MWVWLHLKLL (159 aa)). One can recognise an OBG-type G domain in the interval 160 to 327 (SDVGLVGLPN…LLANILSELQ (168 aa)). GTP-binding positions include 166–173 (GLPNAGKS), 191–195 (FTTLT), 212–215 (DIPG), 279–282 (TKTD), and 308–310 (SSY). Mg(2+) contacts are provided by Ser173 and Thr193.

This sequence belongs to the TRAFAC class OBG-HflX-like GTPase superfamily. OBG GTPase family. In terms of assembly, monomer. Requires Mg(2+) as cofactor.

The protein resides in the cytoplasm. In terms of biological role, an essential GTPase which binds GTP, GDP and possibly (p)ppGpp with moderate affinity, with high nucleotide exchange rates and a fairly low GTP hydrolysis rate. Plays a role in control of the cell cycle, stress response, ribosome biogenesis and in those bacteria that undergo differentiation, in morphogenesis control. The polypeptide is GTPase Obg (Orientia tsutsugamushi (strain Boryong) (Rickettsia tsutsugamushi)).